The primary structure comprises 588 residues: Calicin (588 aa).

Positions 28–98 (WDMALTVDHH…FYSGKVVISE (71 aa)) constitute a BTB domain. A BACK domain is found at 133 to 235 (CLRYLFLAEL…NAVSNKTLMF (103 aa)). A Phosphoserine modification is found at serine 149. 6 Kelch repeats span residues 280–327 (SVVI…AAGR), 328–375 (YIYI…TCGG), 377–423 (VYSV…TKGD), 425–475 (NLYI…SFHQ), 476–525 (DNIL…IGDS), and 526–580 (KVFV…LAKL).

In terms of assembly, interacts with CYLC1; the interaction may be relevant for proper acrosome attachment to the nuclear envelope. As to expression, expressed in testis and in spermatozoa.

Its subcellular location is the cytoplasm. It localises to the cytoskeleton. It is found in the perinuclear theca. The protein localises to the calyx. Its function is as follows. Required for both nuclear and acrosomal shaping during spermiogenesis. The chain is Calicin (Ccin) from Mus musculus (Mouse).